The sequence spans 346 residues: Selenide, water dikinase (346 aa).

Sec-16 is a catalytic residue. Sec-16 is a non-standard amino acid (selenocysteine). Residues Lys-19 and 47 to 49 (TAD) each bind ATP. Asp-50 provides a ligand contact to Mg(2+). Residues Asp-67, Asp-90, and 138–140 (GHS) each bind ATP. Asp-90 serves as a coordination point for Mg(2+). Position 226 (Asp-226) interacts with Mg(2+).

This sequence belongs to the selenophosphate synthase 1 family. Class I subfamily. As to quaternary structure, homodimer. Mg(2+) is required as a cofactor.

The enzyme catalyses hydrogenselenide + ATP + H2O = selenophosphate + AMP + phosphate + 2 H(+). Functionally, synthesizes selenophosphate from selenide and ATP. This chain is Selenide, water dikinase, found in Haemophilus ducreyi (strain 35000HP / ATCC 700724).